The primary structure comprises 161 residues: Probable cell wall elongation regulator TseB (161 aa).

The Cytoplasmic segment spans residues 1–5; the sequence is MRKKA. Residues 6 to 26 traverse the membrane as a helical segment; the sequence is LIFTVIFGIIFLAVLLVSASI. Residues 27–161 lie on the Extracellular side of the membrane; the sequence is YKSAMAQKEE…TGKILKNITP (135 aa).

In terms of assembly, interacts with the penicillin-binding protein PBP2A, a monofunctional transpeptidase.

It is found in the cell membrane. Its function is as follows. Required for normal cell shape. Plays an important role in cell wall elongation during exponential phase and spore outgrowth. Probably regulates the activity of the penicillin-binding protein PBP2A through a direct interaction. Not required for PBP2A activity, stability and localization. The chain is Probable cell wall elongation regulator TseB from Bacillus subtilis (strain 168).